A 98-amino-acid polypeptide reads, in one-letter code: Small ribosomal subunit protein bS6 (98 aa).

Belongs to the bacterial ribosomal protein bS6 family.

Functionally, binds together with bS18 to 16S ribosomal RNA. The sequence is that of Small ribosomal subunit protein bS6 from Staphylococcus carnosus (strain TM300).